Reading from the N-terminus, the 303-residue chain is Thyrotroph embryonic factor (303 aa).

2 disordered regions span residues 1–63 (MSDA…KLEE) and 132–176 (ESAS…DPNC). A Phosphoserine modification is found at Ser-32. The span at 41-61 (KLMENPPREARLDKEKGKEKL) shows a compositional bias: basic and acidic residues. The span at 133-160 (SASSSTASPPSSSTAIFQPSETVSSTES) shows a compositional bias: low complexity. Positions 233–296 (DEKYWTRRKK…GKCKTIVSKY (64 aa)) constitute a bZIP domain. The tract at residues 235-255 (KYWTRRKKNNVAAKRSRDARR) is basic motif. Residues 256-263 (LKENQITI) are leucine-zipper.

It belongs to the bZIP family. PAR subfamily. In terms of assembly, binds DNA as a homodimer or a heterodimer. Can form a heterodimer with DBP.

It localises to the nucleus. Transcription factor that binds to and transactivates the TSHB promoter. Binds to a minimal DNA-binding sequence 5'-[TC][AG][AG]TTA[TC][AG]-3'. This is Thyrotroph embryonic factor (TEF) from Homo sapiens (Human).